Consider the following 450-residue polypeptide: Signal recognition particle 54 kDa protein (450 aa).

GTP is bound by residues 107 to 114 (GIQGSGKT), 188 to 192 (DTAGR), and 247 to 250 (TKLD).

This sequence belongs to the GTP-binding SRP family. SRP54 subfamily. In terms of assembly, part of the signal recognition particle protein translocation system, which is composed of SRP and FtsY. Archaeal SRP consists of a 7S RNA molecule of 300 nucleotides and two protein subunits: SRP54 and SRP19.

It is found in the cytoplasm. It carries out the reaction GTP + H2O = GDP + phosphate + H(+). Functionally, involved in targeting and insertion of nascent membrane proteins into the cytoplasmic membrane. Binds to the hydrophobic signal sequence of the ribosome-nascent chain (RNC) as it emerges from the ribosomes. The SRP-RNC complex is then targeted to the cytoplasmic membrane where it interacts with the SRP receptor FtsY. This chain is Signal recognition particle 54 kDa protein, found in Methanococcus maripaludis (strain C6 / ATCC BAA-1332).